A 702-amino-acid chain; its full sequence is ATP-dependent RNA helicase DDX4 (702 aa).

Positions 22-228 are disordered; it reads FEKDKYSSGA…YIPPPPPEDE (207 aa). Residues 29-46 are compositionally biased toward polar residues; it reads SGANGDTFNRTSASSDIG. Composition is skewed to gly residues over residues 58 to 68 and 125 to 137; these read GGFGRGKGFGN and RGSF…GFGL. Polar residues-rich tracts occupy residues 141 to 150 and 195 to 215; these read NSESDQDQGT and SGKN…SQGP. S195 and S199 each carry phosphoserine. Residues 201–220 form an interaction with RANBP9 region; the sequence is KSETEGGESSDSQGPKVTYI. The Q motif signature appears at 261-289; sequence LTFEEANLCQTLNNNIAKAGYTKLTPVQK. One can recognise a Helicase ATP-binding domain in the interval 292–475; sequence IPIVLAGRDL…GDFLKSSYLF (184 aa). Residue 305-312 coordinates ATP; that stretch reads AQTGSGKT. A DEAD box motif is present at residues 419–422; that stretch reads DEAD. In terms of domain architecture, Helicase C-terminal spans 503–648; the sequence is KLVEILRNIG…DVPAWLEEIA (146 aa). Polar residues predominate over residues 681 to 693; sequence TLNTAGISSSQAP. The interval 681–702 is disordered; the sequence is TLNTAGISSSQAPNPVDDESWD. S700 carries the post-translational modification Phosphoserine.

This sequence belongs to the DEAD box helicase family. DDX4/VASA subfamily. Found in a mRNP complex, at least composed of TDRD1, TDRD6, TDRD7 and DDX4. Interacts with RANBP9. Interacts with RANBP10. Interacts with PIWIL2 and MAEL. Interacts with BMAL1 and CLOCK. Interacts with Tex19.1 and, probably, Tex19.2. Interacts with RBM46. As to expression, testis-specific.

The protein resides in the cytoplasm. It is found in the perinuclear region. The enzyme catalyses ATP + H2O = ADP + phosphate + H(+). ATP-dependent RNA helicase required during spermatogenesis to repress transposable elements and preventing their mobilization, which is essential for the germline integrity. Acts via the piRNA metabolic process, which mediates the repression of transposable elements during meiosis by forming complexes composed of piRNAs and Piwi proteins and governs the methylation and subsequent repression of transposons. Involved in the secondary piRNAs metabolic process, the production of piRNAs in fetal male germ cells through a ping-pong amplification cycle. Required for PIWIL2 slicing-triggered piRNA biogenesis: helicase activity enables utilization of one of the slice cleavage fragments generated by PIWIL2 and processing these pre-piRNAs into piRNAs. The chain is ATP-dependent RNA helicase DDX4 from Mus musculus (Mouse).